We begin with the raw amino-acid sequence, 170 residues long: Protein-lysine myristoyltransferase HlyC (170 aa).

His23 is a catalytic residue. His151 is a heme binding site.

The protein belongs to the RTX toxin acyltransferase family. In terms of assembly, monomer. In terms of processing, proteolytically cleaved by the protease systems ClpAP, ClpXP and FtsH, leading to its degradation.

It localises to the cytoplasm. The enzyme catalyses tetradecanoyl-[ACP] + L-lysyl-[protein] = N(6)-tetradecanoyl-L-lysyl-[protein] + holo-[ACP] + H(+). Its activity is regulated as follows. The acyltransferase activity is inhibited by heme. Functionally, protein-lysine myristoyltransferase that catalyzes myristoylation of the protoxin (HlyA) at two internal lysine residues, thereby converting it to the active toxin. The protein is Protein-lysine myristoyltransferase HlyC of Escherichia coli.